Reading from the N-terminus, the 144-residue chain is D-aminoacyl-tRNA deacylase (144 aa).

The Gly-cisPro motif, important for rejection of L-amino acids signature appears at 137-138; it reads GP.

The protein belongs to the DTD family. In terms of assembly, homodimer.

Its subcellular location is the cytoplasm. It catalyses the reaction glycyl-tRNA(Ala) + H2O = tRNA(Ala) + glycine + H(+). It carries out the reaction a D-aminoacyl-tRNA + H2O = a tRNA + a D-alpha-amino acid + H(+). Its function is as follows. An aminoacyl-tRNA editing enzyme that deacylates mischarged D-aminoacyl-tRNAs. Also deacylates mischarged glycyl-tRNA(Ala), protecting cells against glycine mischarging by AlaRS. Acts via tRNA-based rather than protein-based catalysis; rejects L-amino acids rather than detecting D-amino acids in the active site. By recycling D-aminoacyl-tRNA to D-amino acids and free tRNA molecules, this enzyme counteracts the toxicity associated with the formation of D-aminoacyl-tRNA entities in vivo and helps enforce protein L-homochirality. The polypeptide is D-aminoacyl-tRNA deacylase (Acinetobacter baumannii (strain SDF)).